We begin with the raw amino-acid sequence, 90 residues long: Envelope protein US9 homolog (90 aa).

Topologically, residues 1-63 (MEPLRLADAE…IRRRRRQTRA (63 aa)) are intravirion. The Di-leucine internalization motif signature appears at 12–13 (LL). The segment at 29 to 38 (EAYYTESDDE) is acidic. The chain crosses the membrane as a helical; Signal-anchor for type II membrane protein span at residues 64-84 (AGFVAAFVLVALISGGLGALM). Residues 85–90 (CWLAYR) are Virion surface-facing.

This sequence belongs to the alphaherpesvirinae envelope protein US9 family. Post-translationally, phosphorylated on serines within the acidic cluster. Phosphorylation determines whether endocytosed viral US9 traffics to the trans-Golgi network or recycles to the cell membrane.

It is found in the virion membrane. The protein resides in the host Golgi apparatus membrane. It localises to the host smooth endoplasmic reticulum membrane. Its subcellular location is the host cell membrane. Its function is as follows. Essential for the anterograde spread of the infection throughout the host nervous system. Together with the gE/gI heterodimer, US9 is involved in the sorting and transport of viral structural components toward axon tips. The protein is Envelope protein US9 homolog of Cercopithecine herpesvirus 1 (CeHV-1).